The chain runs to 211 residues: ATP phosphoribosyltransferase (211 aa).

The protein belongs to the ATP phosphoribosyltransferase family. Short subfamily. Heteromultimer composed of HisG and HisZ subunits.

Its subcellular location is the cytoplasm. The catalysed reaction is 1-(5-phospho-beta-D-ribosyl)-ATP + diphosphate = 5-phospho-alpha-D-ribose 1-diphosphate + ATP. It participates in amino-acid biosynthesis; L-histidine biosynthesis; L-histidine from 5-phospho-alpha-D-ribose 1-diphosphate: step 1/9. Its function is as follows. Catalyzes the condensation of ATP and 5-phosphoribose 1-diphosphate to form N'-(5'-phosphoribosyl)-ATP (PR-ATP). Has a crucial role in the pathway because the rate of histidine biosynthesis seems to be controlled primarily by regulation of HisG enzymatic activity. This chain is ATP phosphoribosyltransferase, found in Clostridium botulinum (strain 657 / Type Ba4).